The chain runs to 182 residues: ATP-dependent protease subunit HslV (182 aa).

Thr6 is an active-site residue. Na(+) is bound by residues Ala164, Cys167, and Thr170.

It belongs to the peptidase T1B family. HslV subfamily. As to quaternary structure, a double ring-shaped homohexamer of HslV is capped on each side by a ring-shaped HslU homohexamer. The assembly of the HslU/HslV complex is dependent on binding of ATP.

It is found in the cytoplasm. The catalysed reaction is ATP-dependent cleavage of peptide bonds with broad specificity.. With respect to regulation, allosterically activated by HslU binding. Its function is as follows. Protease subunit of a proteasome-like degradation complex believed to be a general protein degrading machinery. In Borreliella burgdorferi (strain ATCC 35210 / DSM 4680 / CIP 102532 / B31) (Borrelia burgdorferi), this protein is ATP-dependent protease subunit HslV.